The chain runs to 299 residues: Glycine--tRNA ligase alpha subunit (299 aa).

It belongs to the class-II aminoacyl-tRNA synthetase family. As to quaternary structure, tetramer of two alpha and two beta subunits.

It localises to the cytoplasm. The enzyme catalyses tRNA(Gly) + glycine + ATP = glycyl-tRNA(Gly) + AMP + diphosphate. The protein is Glycine--tRNA ligase alpha subunit of Dichelobacter nodosus (strain VCS1703A).